A 1001-amino-acid polypeptide reads, in one-letter code: Ulvan lyase, long isoform (1001 aa).

Residues 1-21 form the signal peptide; that stretch reads MNGLKMLLFSTTLLTAFTLHA. 126–127 provides a ligand contact to substrate; that stretch reads SH. The active-site Proton donor/acceptor is His127. Ca(2+)-binding residues include Asp189, Asp199, and Lys201. Substrate-binding residues include Tyr280 and Arg297. Ca(2+)-binding residues include Asp300, Asp303, and Tyr305. Tyr361 serves as a coordination point for substrate.

This sequence belongs to the polysaccharide lyase 24 family.

Ulvan lyase involved in ulvan degradation. Ulvan is the main polysaccharide component of the Ulvales (green seaweed) cell wall. It is composed of disaccharide building blocks comprising 3-sulfated rhamnose (Rha3S) linked to D-glucuronic acid (GlcA), L-iduronic acid (IduA), or D-xylose (Xyl). Ulvan lyase catalyzes preferentially the endolytic cleavage of the glycosidic bond between Rha3S and the uronic acid GlcA, but not IduA, producing oligosaccharides that have unsaturated 4-deoxy-L-threo-hex-4-enopyranosiduronic acid (deltaUA) at the non-reducing end. The most abundant end products in the degradation of the ulvan polysaccharide were deltaUA-Rha3S disaccharides and deltaUA-Rha3S-IduA-Rha3S and deltaUA-Rha3S-Xyl-Rha3S tetrasaccharides. The chain is Ulvan lyase, long isoform from Pseudoalteromonas sp. (strain PLSV).